Consider the following 565-residue polypeptide: Thiol:disulfide interchange protein DsbD (565 aa).

A signal peptide spans 1-19 (MAQRIFTLILLLCSTSVFA). 2 cysteine pairs are disulfide-bonded: cysteine 122/cysteine 128 and cysteine 182/cysteine 304. 7 helical membrane-spanning segments follow: residues 163 to 183 (LPFSALWALLIGIGIAFTPCV), 208 to 228 (LLTFIYVQGMALTYTALGLVV), 243 to 263 (YVLIGLAIVFTLLAMSMFGLF), 296 to 316 (IAGLICSPCTTAPLSAILLYI), 323 to 343 (WLGGGTLYLYALGMGLPLMLI), 357 to 377 (WMEQVKTAFGFVILALPVFLL), and 384 to 404 (VWGLRLWSALGVAFFGWAFIT). One can recognise a Thioredoxin domain in the interval 434 to 565 (WAFGATHTAQ…FSAHLRDRQP (132 aa)). The cysteines at positions 480 and 483 are disulfide-linked.

It belongs to the thioredoxin family. DsbD subfamily.

The protein localises to the cell inner membrane. The enzyme catalyses [protein]-dithiol + NAD(+) = [protein]-disulfide + NADH + H(+). The catalysed reaction is [protein]-dithiol + NADP(+) = [protein]-disulfide + NADPH + H(+). Functionally, required to facilitate the formation of correct disulfide bonds in some periplasmic proteins and for the assembly of the periplasmic c-type cytochromes. Acts by transferring electrons from cytoplasmic thioredoxin to the periplasm. This transfer involves a cascade of disulfide bond formation and reduction steps. The protein is Thiol:disulfide interchange protein DsbD of Shigella flexneri serotype 5b (strain 8401).